The following is a 301-amino-acid chain: Light-independent protochlorophyllide reductase iron-sulfur ATP-binding protein (301 aa).

A compositionally biased stretch (low complexity) spans 1 to 13; that stretch reads MNVTLRPPLTTAP. The interval 1-21 is disordered; the sequence is MNVTLRPPLTTAPRRPDGAGS. ATP contacts are provided by residues 45 to 50 and Lys74; that span reads GIGKST. A Mg(2+)-binding site is contributed by Ser49. Cys130 and Cys164 together coordinate [4Fe-4S] cluster. ATP is bound by residues 215-216 and 239-241; these read NR and PDL.

This sequence belongs to the NifH/BchL/ChlL family. As to quaternary structure, homodimer. Protochlorophyllide reductase is composed of three subunits; BchL, BchN and BchB. [4Fe-4S] cluster serves as cofactor.

The catalysed reaction is chlorophyllide a + oxidized 2[4Fe-4S]-[ferredoxin] + 2 ADP + 2 phosphate = protochlorophyllide a + reduced 2[4Fe-4S]-[ferredoxin] + 2 ATP + 2 H2O. The protein operates within porphyrin-containing compound metabolism; bacteriochlorophyll biosynthesis (light-independent). Component of the dark-operative protochlorophyllide reductase (DPOR) that uses Mg-ATP and reduced ferredoxin to reduce ring D of protochlorophyllide (Pchlide) to form chlorophyllide a (Chlide). This reaction is light-independent. The L component serves as a unique electron donor to the NB-component of the complex, and binds Mg-ATP. This Bradyrhizobium sp. (strain BTAi1 / ATCC BAA-1182) protein is Light-independent protochlorophyllide reductase iron-sulfur ATP-binding protein.